A 132-amino-acid chain; its full sequence is Histone H2A.1 (132 aa).

The interval 1–21 (MSGGKGKAGTSEKASTSRSAK) is disordered. Position 2 is an N-acetylserine (Ser-2). Residues Lys-5 and Lys-7 each carry the N6-acetyllysine modification. Position 105 is an N5-methylglutamine (Gln-105). Ser-129 carries the phosphoserine modification. Residues 129–130 (SQ) carry the [ST]-Q motif motif.

It belongs to the histone H2A family. As to quaternary structure, the nucleosome is a histone octamer containing two molecules each of H2A, H2B, H3 and H4 assembled in one H3-H4 heterotetramer and two H2A-H2B heterodimers. The octamer wraps approximately 147 bp of DNA. In terms of processing, phosphorylated to form H2AS128ph (gamma-H2A) in response to DNA double-strand breaks (DSBs) generated by exogenous genotoxic agents and by stalled replication forks. Phosphorylation is dependent on the DNA damage checkpoint kinases MEC1/ATR and TEL1/ATM, spreads on either side of a detected DSB site and may mark the surrounding chromatin for recruitment of proteins required for DNA damage signaling and repair. Gamma-H2A is removed from the DNA prior to the strand invasion-primer extension step of the repair process and subsequently dephosphorylated. Dephosphorylation is necessary for efficient recovery from the DNA damage checkpoint. Acetylated by ESA1 to form H2AK4ac and H2AK7ac.

Its subcellular location is the nucleus. The protein resides in the chromosome. Its function is as follows. Core component of nucleosome which plays a central role in DNA double strand break (DSB) repair. Nucleosomes wrap and compact DNA into chromatin, limiting DNA accessibility to the cellular machineries which require DNA as a template. Histones thereby play a central role in transcription regulation, DNA repair, DNA replication and chromosomal stability. DNA accessibility is regulated via a complex set of post-translational modifications of histones, also called histone code, and nucleosome remodeling. The chain is Histone H2A.1 (HTA1) from Candida albicans (strain SC5314 / ATCC MYA-2876) (Yeast).